A 115-amino-acid polypeptide reads, in one-letter code: Ribonuclease P protein component (115 aa).

Belongs to the RnpA family. Consists of a catalytic RNA component (M1 or rnpB) and a protein subunit.

The catalysed reaction is Endonucleolytic cleavage of RNA, removing 5'-extranucleotides from tRNA precursor.. In terms of biological role, RNaseP catalyzes the removal of the 5'-leader sequence from pre-tRNA to produce the mature 5'-terminus. It can also cleave other RNA substrates such as 4.5S RNA. The protein component plays an auxiliary but essential role in vivo by binding to the 5'-leader sequence and broadening the substrate specificity of the ribozyme. This chain is Ribonuclease P protein component, found in Staphylococcus epidermidis (strain ATCC 35984 / DSM 28319 / BCRC 17069 / CCUG 31568 / BM 3577 / RP62A).